A 155-amino-acid polypeptide reads, in one-letter code: WPP domain-containing protein 1 (155 aa).

Disordered regions lie at residues Met-1–Ser-41 and Ser-124–Ala-155. Over residues Glu-7–Thr-39 the composition is skewed to low complexity. Positions Thr-28 to Val-131 are WPP. Over residues Val-146–Ala-155 the composition is skewed to basic and acidic residues.

As to quaternary structure, binds to FPP proteins. Interacts with WAP, WIP1, WIP2 and WIP3 through its WPP domain. Interacts with HSP70-1, HSP70-3 and WIT1. Component of a ternary complex composed of WPP1, HSP70-1 and WIT1. Expressed in roots, stems and leaves.

It localises to the nucleus envelope. The protein localises to the cytoplasm. The protein resides in the nucleus. Its subcellular location is the golgi apparatus. It is found in the nucleus matrix. Regulates the mitotic activity in roots. Plays a role with HSP70-1 in facilitating WIT1 nuclear envelope targeting. The chain is WPP domain-containing protein 1 (WPP1) from Arabidopsis thaliana (Mouse-ear cress).